The following is a 592-amino-acid chain: Arginine--tRNA ligase (592 aa).

The short motif at P123 to H133 is the 'HIGH' region element.

This sequence belongs to the class-I aminoacyl-tRNA synthetase family. Monomer.

It is found in the cytoplasm. It carries out the reaction tRNA(Arg) + L-arginine + ATP = L-arginyl-tRNA(Arg) + AMP + diphosphate. The chain is Arginine--tRNA ligase from Flavobacterium johnsoniae (strain ATCC 17061 / DSM 2064 / JCM 8514 / BCRC 14874 / CCUG 350202 / NBRC 14942 / NCIMB 11054 / UW101) (Cytophaga johnsonae).